The following is a 132-amino-acid chain: MIEKNNSNVSPPRRDLQEVRAIAKRVRMSPHKVRKVIDQIRGRSYEEALMLLEFMPYRACYPILQTVCSAAANANHNLGLSKANLIISKVMVDQGPVLKRFRPRAQGRGYPIRKPSCTITVFVKNHPSQNEN.

The protein belongs to the universal ribosomal protein uL22 family. In terms of assembly, part of the 50S ribosomal subunit.

The protein localises to the plastid. Its subcellular location is the chloroplast. Its function is as follows. This protein binds specifically to 23S rRNA. The globular domain of the protein is located near the polypeptide exit tunnel on the outside of the subunit, while an extended beta-hairpin is found that lines the wall of the exit tunnel in the center of the 70S ribosome. The chain is Large ribosomal subunit protein uL22c (rpl22) from Staurastrum punctulatum (Green alga).